A 799-amino-acid polypeptide reads, in one-letter code: Serine/threonine-protein kinase AfsK (799 aa).

Positions 16–271 (FEVLGRLGAG…QAQLAPHLFG (256 aa)) constitute a Protein kinase domain. Residues 22 to 30 (LGAGGMGLV) and K44 each bind ATP. S71 bears the Phosphoserine; by autocatalysis mark. D138 functions as the Proton acceptor in the catalytic mechanism. T168 is subject to Phosphothreonine; by autocatalysis. 2 disordered regions span residues 295–343 (RRNG…PAPP) and 393–426 (LAAS…PAGW). Composition is skewed to pro residues over residues 325-343 (HAPP…PAPP) and 411-421 (VPAPAPAPPEA).

The protein belongs to the protein kinase superfamily. Ser/Thr protein kinase family. Interacts (via the N-terminal kinase domain) with KbpA; the interaction prevents autophosphorylation of AfsK. In terms of processing, autophosphorylated mainly on threonine residues. Some phosphorylation on serine residues. Autophosphorylation on Thr-168 is the major site enhancing kinase activity towards AfsR, and is regulated though interaction with KbpA.

The enzyme catalyses L-seryl-[protein] + ATP = O-phospho-L-seryl-[protein] + ADP + H(+). It catalyses the reaction L-threonyl-[protein] + ATP = O-phospho-L-threonyl-[protein] + ADP + H(+). Involved in the regulation of secondary metabolism by phosphorylating, on both Ser and Thr, the AfsR global regulatory protein involved in the control of secondary metabolism. The sequence is that of Serine/threonine-protein kinase AfsK (afsK) from Streptomyces coelicolor (strain ATCC BAA-471 / A3(2) / M145).